A 748-amino-acid chain; its full sequence is Spidroin-1 (748 aa).

25 repeat units span residues 1 to 25 (QGAGAAAAAAGGAGQGGYGGLGGQG), 26 to 38 (AGQGGYGGLGGQG), 39 to 66 (AGQGAGAAAAAAAGGAGQGGYGGLGSQG), 67 to 96 (AGRGGQGAGAAAAAAGGAGQGGYGGLGSQG), 97 to 130 (AGRGGLGGQGAGAAAAAAAGGAGQGGYGGLGNQG), 131 to 158 (AGRGGQGAAAAAAGGAGQGGYGGLGSQG), 159 to 191 (AGRGGLGGQGAGAAAAAAGGAGQGGYGGLGGQG), 192 to 204 (AGQGGYGGLGSQG), 205 to 235 (AGRGGLGGQGAGAAAAAAAGGAGQGGLGGQG), 236 to 262 (AGQGAGASAAAAGGAGQGGYGGLGSQG), 263 to 292 (AGRGGEGAGAAAAAAGGAGQGGYGGLGGQG), 293 to 305 (AGQGGYGGLGSQG), 306 to 333 (AGRGGLGGQGAGAAAAGGAGQGGLGGQG), 334 to 360 (AGQGAGAAAAAAGGAGQGGYGGLGSQG), 361 to 394 (AGRGGLGGQGAGAVAAAAAGGAGQGGYGGLGSQG), 395 to 424 (AGRGGQGAGAAAAAAGGAGQRGYGGLGNQG), 425 to 458 (AGRGGLGGQGAGAAAAAAAGGAGQGGYGGLGNQG), 459 to 485 (AGRGGQGAAAAAGGAGQGGYGGLGSQG), 486 to 512 (AGRGGQGAGAAAAAAVGAGQEGIRGQG), 513 to 525 (AGQGGYGGLGSQG), 526 to 555 (SGRGGLGGQGAGAAAAAAGGAGQGGLGGQG), 556 to 582 (AGQGAGAAAAAAGGVRQGGYGGLGSQG), 583 to 612 (AGRGGQGAGAAAAAAGGAGQGGYGGLGGQG), 613 to 642 (VGRGGLGGQGAGAAAAGGAGQGGYGGVGSG), and 643 to 655 (ASAASAAASRLSS). Positions 1-655 (QGAGAAAAAA…ASAAASRLSS (655 aa)) are 25 X approximate tandem repeats.

This sequence belongs to the silk fibroin family. As to quaternary structure, major subunit, with spidroin 2, of the dragline silk.

It localises to the secreted. Its subcellular location is the extracellular space. In terms of biological role, spiders' major ampullate silk possesses unique characteristics of strength and elasticity. Fibroin consists of pseudocrystalline regions of antiparallel beta-sheet interspersed with elastic amorphous segments. This chain is Spidroin-1, found in Trichonephila clavipes (Golden silk orbweaver).